A 430-amino-acid chain; its full sequence is Alpha-humulene synthase asR6 (430 aa).

It belongs to the terpene synthase family. Alpha-humulene synthase eupE subfamily. The cofactor is Mg(2+).

The enzyme catalyses (2E,6E)-farnesyl diphosphate = alpha-humulene + diphosphate. The protein operates within secondary metabolite biosynthesis; terpenoid biosynthesis. In terms of biological role, alpha-humulene synthase; part of the gene cluster that mediates the biosynthesis of xenovulene A, an unusual meroterpenoid that has potent inhibitory effects on the human gamma-aminobutyrate A (GABAA) benzodiazepine receptor. The first step of xenovulene A biosynthesis is the biosynthesis of 3-methylorcinaldehyde performed by the non-reducing polyketide synthase aspks1. The salicylate hydroxylase asL1 then catalyzes the oxidative dearomatization of 3-methylorcinaldehyde to yield a dearomatized hydroxycyclohexadione. The 2-oxoglutarate-dependent dioxygenase asL3 further catalyzes the oxidative ring expansion to provide the first tropolone metabolite. The cytochrome P450 monooxygenase asR2 allows the synthesis of tropolone hemiacetal. In parallel, a previously unrecognised class of terpene cyclase, asR6, produces alpha-humulene from farnesylpyrophosphate (FPP). The putative Diels-Alderase asR5 probably catalyzes the formation of the tropolone-humulene skeleton by linking humulene and the polyketide moiety. Oxidative-ring contractions catalyzed by asL4 and asL6 then processively remove carbon atoms from the polyketide to yield xenovulene A. In Sarocladium schorii (Acremonium strictum (strain IMI 501407)), this protein is Alpha-humulene synthase asR6.